The sequence spans 73 residues: UPF0499 protein NFIA_054990 (73 aa).

A signal peptide spans 1-20 (MKSFNLLSLSLLLAIASAAA). 3 disulfide bridges follow: cysteine 46–cysteine 60, cysteine 50–cysteine 63, and cysteine 56–cysteine 70.

The protein belongs to the UPF0499 family.

It localises to the secreted. This Neosartorya fischeri (strain ATCC 1020 / DSM 3700 / CBS 544.65 / FGSC A1164 / JCM 1740 / NRRL 181 / WB 181) (Aspergillus fischerianus) protein is UPF0499 protein NFIA_054990.